The sequence spans 124 residues: Fluoride-specific ion channel FluC (124 aa).

The next 3 membrane-spanning stretches (helical) occupy residues 36 to 56 (VGTMIVNVVGSFLMGVLVVVL), 63 to 83 (YAPFLMTGMLGGFTTFSAFSL), and 99 to 119 (AYVGLSVGLSLAGLMAGMAAV). 2 residues coordinate Na(+): glycine 73 and threonine 76.

This sequence belongs to the fluoride channel Fluc/FEX (TC 1.A.43) family.

The protein resides in the cell inner membrane. It catalyses the reaction fluoride(in) = fluoride(out). Na(+) is not transported, but it plays an essential structural role and its presence is essential for fluoride channel function. In terms of biological role, fluoride-specific ion channel. Important for reducing fluoride concentration in the cell, thus reducing its toxicity. This Cereibacter sphaeroides (strain ATCC 17029 / ATH 2.4.9) (Rhodobacter sphaeroides) protein is Fluoride-specific ion channel FluC.